Consider the following 365-residue polypeptide: tRNA/tmRNA (uracil-C(5))-methyltransferase (365 aa).

Q189, Y217, N222, E238, and D298 together coordinate S-adenosyl-L-methionine. The Nucleophile role is filled by C323. Catalysis depends on E357, which acts as the Proton acceptor.

It belongs to the class I-like SAM-binding methyltransferase superfamily. RNA M5U methyltransferase family. TrmA subfamily.

The enzyme catalyses uridine(54) in tRNA + S-adenosyl-L-methionine = 5-methyluridine(54) in tRNA + S-adenosyl-L-homocysteine + H(+). It catalyses the reaction uridine(341) in tmRNA + S-adenosyl-L-methionine = 5-methyluridine(341) in tmRNA + S-adenosyl-L-homocysteine + H(+). Functionally, dual-specificity methyltransferase that catalyzes the formation of 5-methyluridine at position 54 (m5U54) in all tRNAs, and that of position 341 (m5U341) in tmRNA (transfer-mRNA). In Shewanella amazonensis (strain ATCC BAA-1098 / SB2B), this protein is tRNA/tmRNA (uracil-C(5))-methyltransferase.